The primary structure comprises 175 residues: Alpha-crystallin B chain (175 aa).

At M1 the chain carries N-acetylmethionine. Residues S19, S45, and S59 each carry the phosphoserine modification. The region spanning 56–164 is the sHSP domain; it reads RAPSWIDTGL…PERTIPITRE (109 aa). H83 contributes to the Zn(2+) binding site. K92 carries the post-translational modification N6-acetyllysine. Residues H104, E106, H111, and H119 each coordinate Zn(2+). The interval 145–175 is disordered; the sequence is VNGPRKQVSGPERTIPITREEKPAVAAAPKK. N6-acetyllysine is present on K166.

This sequence belongs to the small heat shock protein (HSP20) family. In terms of assembly, heteromer composed of three CRYAA and one CRYAB subunits. Aggregates with homologous proteins, including the small heat shock protein HSPB1, to form large heteromeric complexes. Inter-subunit bridging via zinc ions enhances stability, which is crucial as there is no protein turn over in the lens. Interacts with HSPBAP1. Interacts with TTN/titin. Interacts with TMEM109; in the cellular response to DNA damage. Interacts with DES; binds rapidly during early stages of DES filament assembly and a reduced binding seen in the later stages. Interacts with TMED10; the interaction mediates the translocation from the cytoplasm into the ERGIC (endoplasmic reticulum-Golgi intermediate compartment) and thereby secretion. Interacts with ATP6V1A and with MTOR, forming a ternary complex. Abundantly expressed in the lens of the eye. Expressed in ventricular cardiomyocytes of the heart. Also expressed in skeletal muscle and the kidney.

The protein localises to the cytoplasm. It localises to the cytosol. It is found in the nucleus. The protein resides in the secreted. Its subcellular location is the lysosome. May contribute to the transparency and refractive index of the lens. Has chaperone-like activity, preventing aggregation of various proteins under a wide range of stress conditions. In lens epithelial cells, stabilizes the ATP6V1A protein, preventing its degradation by the proteasome. The chain is Alpha-crystallin B chain from Mus musculus (Mouse).